A 137-amino-acid chain; its full sequence is Nucleoside diphosphate kinase (137 aa).

Positions 10, 58, 86, 92, 103, and 113 each coordinate ATP. Catalysis depends on H116, which acts as the Pros-phosphohistidine intermediate.

Belongs to the NDK family. In terms of assembly, homotetramer. Mg(2+) serves as cofactor.

The protein resides in the cytoplasm. It carries out the reaction a 2'-deoxyribonucleoside 5'-diphosphate + ATP = a 2'-deoxyribonucleoside 5'-triphosphate + ADP. It catalyses the reaction a ribonucleoside 5'-diphosphate + ATP = a ribonucleoside 5'-triphosphate + ADP. In terms of biological role, major role in the synthesis of nucleoside triphosphates other than ATP. The ATP gamma phosphate is transferred to the NDP beta phosphate via a ping-pong mechanism, using a phosphorylated active-site intermediate. This chain is Nucleoside diphosphate kinase, found in Helicobacter pylori (strain G27).